The following is a 385-amino-acid chain: Signal transduction histidine-protein kinase/phosphatase DegS (385 aa).

Residues glutamine 31–glutamine 141 are a coiled coil. Serine 76 bears the Phosphoserine mark. The region spanning arginine 183–leucine 385 is the Histidine kinase domain. Phosphohistidine; by autocatalysis is present on histidine 189.

Autophosphorylated. Phosphorylated in vitro at Ser-76 by the serine/threonine-protein kinase YbdM, which stimulates the phosphate transfer to DegU.

It localises to the cytoplasm. It carries out the reaction ATP + protein L-histidine = ADP + protein N-phospho-L-histidine.. With respect to regulation, regulated via serine phosphorylation of its input domain. Phosphotransfer from DegS to DegU is stimulated by phosphorylation on Ser-76 and by DegQ. In terms of biological role, member of the two-component regulatory system DegS/DegU, which plays an important role in the transition growth phase. Involved in the control of expression of different cellular functions, including production of degradative enzymes such as the neutral and alkaline proteases, flagellum formation and biofilm formation. Acts both as a protein kinase that undergoes autophosphorylation and subsequently transfers the phosphate to DegU, and as a protein phosphatase that dephosphorylates phospho-DegU. The protein is Signal transduction histidine-protein kinase/phosphatase DegS (degS) of Bacillus subtilis (strain 168).